The following is a 178-amino-acid chain: Oligoribonuclease (178 aa).

In terms of domain architecture, Exonuclease spans 7-168 (LIWIDLEMTG…DDIRESIAEL (162 aa)). Tyr128 is an active-site residue.

Belongs to the oligoribonuclease family.

The protein localises to the cytoplasm. In terms of biological role, 3'-to-5' exoribonuclease specific for small oligoribonucleotides. The protein is Oligoribonuclease of Pseudomonas syringae pv. syringae (strain B728a).